The primary structure comprises 118 residues: Hydrogenase maturation factor HypA (118 aa).

Residue histidine 2 participates in Ni(2+) binding. 4 residues coordinate Zn(2+): cysteine 74, cysteine 77, cysteine 91, and cysteine 94.

The protein belongs to the HypA/HybF family.

Its function is as follows. Involved in the maturation of [NiFe] hydrogenases. Required for nickel insertion into the metal center of the hydrogenase. The protein is Hydrogenase maturation factor HypA of Helicobacter hepaticus (strain ATCC 51449 / 3B1).